Consider the following 211-residue polypeptide: Protein-L-isoaspartate O-methyltransferase 1 (211 aa).

Ser62 is a catalytic residue.

This sequence belongs to the methyltransferase superfamily. L-isoaspartyl/D-aspartyl protein methyltransferase family.

It is found in the cytoplasm. The enzyme catalyses [protein]-L-isoaspartate + S-adenosyl-L-methionine = [protein]-L-isoaspartate alpha-methyl ester + S-adenosyl-L-homocysteine. Its function is as follows. Catalyzes the methyl esterification of L-isoaspartyl residues in peptides and proteins that result from spontaneous decomposition of normal L-aspartyl and L-asparaginyl residues. It plays a role in the repair and/or degradation of damaged proteins. This Shewanella sediminis (strain HAW-EB3) protein is Protein-L-isoaspartate O-methyltransferase 1.